We begin with the raw amino-acid sequence, 688 residues long: G protein-coupled receptor kinase 3 (688 aa).

The interval 1 to 190 (MADLEAVLAD…ELNIHLTMND (190 aa)) is N-terminal. Positions 54–175 (TFDKIFNQRI…MESDKFTRFC (122 aa)) constitute an RGS domain. The region spanning 191 to 453 (FSVHRIIGRG…AQELKTHDFF (263 aa)) is the Protein kinase domain. ATP-binding positions include 197–205 (IGRGGFGEV) and lysine 220. The active-site Proton acceptor is the aspartate 317. An AGC-kinase C-terminal domain is found at 454–521 (RGIDWQHVYL…VISERWQQEV (68 aa)). A PH domain is found at 558–652 (DCIVHGYMLK…WKKELTETFM (95 aa)).

It belongs to the protein kinase superfamily. AGC Ser/Thr protein kinase family. GPRK subfamily. Interacts with GIT1. Post-translationally, ubiquitinated. As to expression, ubiquitous; brain, spleen &gt; heart, lung &gt; kidney.

Its subcellular location is the postsynapse. The protein resides in the presynapse. It carries out the reaction [beta-adrenergic receptor] + ATP = [beta-adrenergic receptor]-phosphate + ADP + H(+). In terms of biological role, specifically phosphorylates the agonist-occupied form of the beta-adrenergic and closely related receptors. The polypeptide is G protein-coupled receptor kinase 3 (Bos taurus (Bovine)).